The primary structure comprises 242 residues: Derlin-1 (242 aa).

Topologically, residues 1 to 20 (MSSPAEYYNSLPPISKAYGT) are cytoplasmic. The helical transmembrane segment at 21–41 (LCFFATVLCQLQILNPPFLAL) threads the bilayer. Topologically, residues 42 to 55 (YYPFVFKKFQIWRL) are lumenal. The chain crosses the membrane as a helical span at residues 56-76 (FTSFFFLGKFSINFGIRLLMI). The Cytoplasmic portion of the chain corresponds to 77 to 94 (ARYGVQLEKGAFEKRTAD). Residues 95–115 (FLWMMIFGAISLLALSAIPFL) form a helical membrane-spanning segment. Residues 116–157 (DIYFLGVPMVSMLLYVWSREYPNSQISMYGLVQLRSFYLPWA) lie on the Lumenal side of the membrane. Residues 158–178 (MLGLDVIFGSEILPGLLGILV) form a helical membrane-spanning segment. Topologically, residues 179–242 (GHTYYFLSVL…FRGRSYRLSQ (64 aa)) are cytoplasmic.

This sequence belongs to the derlin family. In terms of tissue distribution, seedling shoots and roots.

Its subcellular location is the endoplasmic reticulum membrane. In terms of biological role, may be involved in the degradation process of specific misfolded endoplasmic reticulum (ER) luminal proteins. The protein is Derlin-1 (DER1) of Oryza sativa subsp. japonica (Rice).